Consider the following 447-residue polypeptide: Adenylosuccinate synthetase (447 aa).

Residues 35-41 (GDEGKGK) and 63-65 (GHT) each bind GTP. The Proton acceptor role is filled by Asp36. Residues Asp36 and Gly63 each coordinate Mg(2+). IMP-binding positions include 36–39 (DEGK), 61–64 (NAGH), Thr153, Arg167, Asn245, Thr260, and Arg324. The active-site Proton donor is His64. Residue 320 to 326 (VTTKRKR) participates in substrate binding. GTP contacts are provided by residues Arg326, 352 to 354 (KLD), and 435 to 437 (GVG).

This sequence belongs to the adenylosuccinate synthetase family. Homodimer. The cofactor is Mg(2+).

The protein resides in the cytoplasm. It carries out the reaction IMP + L-aspartate + GTP = N(6)-(1,2-dicarboxyethyl)-AMP + GDP + phosphate + 2 H(+). Its pathway is purine metabolism; AMP biosynthesis via de novo pathway; AMP from IMP: step 1/2. In terms of biological role, plays an important role in the de novo pathway and in the salvage pathway of purine nucleotide biosynthesis. Catalyzes the first committed step in the biosynthesis of AMP from IMP. This chain is Adenylosuccinate synthetase, found in Drosophila sechellia (Fruit fly).